Here is a 76-residue protein sequence, read N- to C-terminus: Sec-independent protein translocase protein TatA (76 aa).

The helical transmembrane segment at 1–21 (MGSFSIWHWLVVLAIVVLVFG) threads the bilayer. The tract at residues 41–76 (EGMKGAEEESTPPPPAQQVTGHSIKSEIEEKDQTKV) is disordered. The span at 64–76 (IKSEIEEKDQTKV) shows a compositional bias: basic and acidic residues.

Belongs to the TatA/E family. As to quaternary structure, the Tat system comprises two distinct complexes: a TatABC complex, containing multiple copies of TatA, TatB and TatC subunits, and a separate TatA complex, containing only TatA subunits. Substrates initially bind to the TatABC complex, which probably triggers association of the separate TatA complex to form the active translocon.

The protein resides in the cell inner membrane. In terms of biological role, part of the twin-arginine translocation (Tat) system that transports large folded proteins containing a characteristic twin-arginine motif in their signal peptide across membranes. TatA could form the protein-conducting channel of the Tat system. The chain is Sec-independent protein translocase protein TatA from Nitrosomonas europaea (strain ATCC 19718 / CIP 103999 / KCTC 2705 / NBRC 14298).